The following is a 449-amino-acid chain: Dolichyl-diphosphooligosaccharide--protein glycosyltransferase 48 kDa subunit (449 aa).

The N-terminal stretch at 1–18 (MMWKALLIAVLAIAHCQA) is a signal peptide. Residues 19–412 (VLETDANTLV…ERFIPSAFPY (394 aa)) are Lumenal-facing. A helical transmembrane segment spans residues 413 to 433 (YTSAFSMMIGVFVFSFVFLHF). The Cytoplasmic portion of the chain corresponds to 434-449 (KDEPVGRAAKEDKKSQ).

The protein belongs to the DDOST 48 kDa subunit family. As to quaternary structure, component of the oligosaccharyltransferase (OST) complex.

Its subcellular location is the endoplasmic reticulum membrane. The protein operates within protein modification; protein glycosylation. Subunit of the oligosaccharyl transferase (OST) complex that catalyzes the initial transfer of a defined glycan (Glc(3)Man(9)GlcNAc(2) in eukaryotes) from the lipid carrier dolichol-pyrophosphate to an asparagine residue within an Asn-X-Ser/Thr consensus motif in nascent polypeptide chains, the first step in protein N-glycosylation. N-glycosylation occurs cotranslationally and the complex associates with the Sec61 complex at the channel-forming translocon complex that mediates protein translocation across the endoplasmic reticulum (ER). All subunits are required for a maximal enzyme activity. Required for the assembly of both SST3A- and SS3B-containing OST complexes. The polypeptide is Dolichyl-diphosphooligosaccharide--protein glycosyltransferase 48 kDa subunit (Ost48) (Drosophila melanogaster (Fruit fly)).